Here is a 347-residue protein sequence, read N- to C-terminus: 4-hydroxy-2-oxovalerate aldolase (347 aa).

One can recognise a Pyruvate carboxyltransferase domain in the interval isoleucine 2–methionine 252. A substrate-binding site is contributed by arginine 10 to aspartate 11. Mn(2+) is bound at residue aspartate 11. The active-site Proton acceptor is the histidine 14. Substrate contacts are provided by serine 164 and histidine 191. Histidine 191 and histidine 193 together coordinate Mn(2+).

The protein belongs to the 4-hydroxy-2-oxovalerate aldolase family.

The catalysed reaction is (S)-4-hydroxy-2-oxopentanoate = acetaldehyde + pyruvate. The sequence is that of 4-hydroxy-2-oxovalerate aldolase (mhpE) from Burkholderia thailandensis (strain ATCC 700388 / DSM 13276 / CCUG 48851 / CIP 106301 / E264).